Here is a 187-residue protein sequence, read N- to C-terminus: Large ribosomal subunit protein uL13 (187 aa).

It belongs to the universal ribosomal protein uL13 family.

This is Large ribosomal subunit protein uL13 (rpl13a) from Dictyostelium discoideum (Social amoeba).